Consider the following 342-residue polypeptide: Holliday junction branch migration complex subunit RuvB (342 aa).

The interval 1–184 (MEENFDIREQ…FGINLHLEYY (184 aa)) is large ATPase domain (RuvB-L). ATP-binding positions include Leu23, Arg24, Gly65, Lys68, Thr69, Thr70, 131-133 (EDY), Arg174, Tyr184, and Arg221. Mg(2+) is bound at residue Thr69. A small ATPAse domain (RuvB-S) region spans residues 185 to 255 (DDDVLTSIIR…IARFALEALN (71 aa)). The interval 258–342 (RYGLDEIDNK…YNSQKTLFDD (85 aa)) is head domain (RuvB-H). Residues Arg313 and Arg318 each contribute to the DNA site.

This sequence belongs to the RuvB family. In terms of assembly, homohexamer. Forms an RuvA(8)-RuvB(12)-Holliday junction (HJ) complex. HJ DNA is sandwiched between 2 RuvA tetramers; dsDNA enters through RuvA and exits via RuvB. An RuvB hexamer assembles on each DNA strand where it exits the tetramer. Each RuvB hexamer is contacted by two RuvA subunits (via domain III) on 2 adjacent RuvB subunits; this complex drives branch migration. In the full resolvosome a probable DNA-RuvA(4)-RuvB(12)-RuvC(2) complex forms which resolves the HJ.

It is found in the cytoplasm. It carries out the reaction ATP + H2O = ADP + phosphate + H(+). The RuvA-RuvB-RuvC complex processes Holliday junction (HJ) DNA during genetic recombination and DNA repair, while the RuvA-RuvB complex plays an important role in the rescue of blocked DNA replication forks via replication fork reversal (RFR). RuvA specifically binds to HJ cruciform DNA, conferring on it an open structure. The RuvB hexamer acts as an ATP-dependent pump, pulling dsDNA into and through the RuvAB complex. RuvB forms 2 homohexamers on either side of HJ DNA bound by 1 or 2 RuvA tetramers; 4 subunits per hexamer contact DNA at a time. Coordinated motions by a converter formed by DNA-disengaged RuvB subunits stimulates ATP hydrolysis and nucleotide exchange. Immobilization of the converter enables RuvB to convert the ATP-contained energy into a lever motion, pulling 2 nucleotides of DNA out of the RuvA tetramer per ATP hydrolyzed, thus driving DNA branch migration. The RuvB motors rotate together with the DNA substrate, which together with the progressing nucleotide cycle form the mechanistic basis for DNA recombination by continuous HJ branch migration. Branch migration allows RuvC to scan DNA until it finds its consensus sequence, where it cleaves and resolves cruciform DNA. The polypeptide is Holliday junction branch migration complex subunit RuvB (Phocaeicola vulgatus (strain ATCC 8482 / DSM 1447 / JCM 5826 / CCUG 4940 / NBRC 14291 / NCTC 11154) (Bacteroides vulgatus)).